We begin with the raw amino-acid sequence, 97 residues long: MKLRPLHDRVIVKRNEVELKSAGGIVLTGSAAGKSTRGVVLSVGKGRILDNGSIKKLDVKVGDIVIFNEGYGAKTETINNEEVLILTENDILAIVEK.

Belongs to the GroES chaperonin family. As to quaternary structure, heptamer of 7 subunits arranged in a ring. Interacts with the chaperonin GroEL.

The protein localises to the cytoplasm. In terms of biological role, together with the chaperonin GroEL, plays an essential role in assisting protein folding. The GroEL-GroES system forms a nano-cage that allows encapsulation of the non-native substrate proteins and provides a physical environment optimized to promote and accelerate protein folding. GroES binds to the apical surface of the GroEL ring, thereby capping the opening of the GroEL channel. In Buchnera aphidicola subsp. Cinara cedri (strain Cc), this protein is Co-chaperonin GroES.